Consider the following 983-residue polypeptide: Kinesin-like protein KIN-14I (983 aa).

In terms of domain architecture, Calponin-homology (CH) spans 44–166; it reads ASRRYEAANW…CVLAIKSYDE (123 aa). Composition is skewed to polar residues over residues 203–214 and 278–287; these read SLSRTSSINNEK and ESTSSQNNRS. Disordered regions lie at residues 203-227 and 276-295; these read SLSR…LSSP and PRES…LGER. Residues 399–724 form the Kinesin motor domain; it reads SIRVYCRVRP…LKFAERVATV (326 aa). 481–488 lines the ATP pocket; that stretch reads GQTGSGKT. A coiled-coil region spans residues 731-758; it reads VNNDTSDVKELKEQIATLKAALARKEAE. 2 disordered regions span residues 802 to 824 and 921 to 983; these read TVNS…DDRS and TRSN…NARH. Residues 939–951 are compositionally biased toward polar residues; sequence SPQSRNNSNNTVS.

The protein belongs to the TRAFAC class myosin-kinesin ATPase superfamily. Kinesin family. KIN-14 subfamily.

In Arabidopsis thaliana (Mouse-ear cress), this protein is Kinesin-like protein KIN-14I.